A 325-amino-acid polypeptide reads, in one-letter code: DNA repair and recombination protein RadA (325 aa).

Position 107–114 (107–114 (GEFGSGKT)) interacts with ATP.

This sequence belongs to the eukaryotic RecA-like protein family.

In terms of biological role, involved in DNA repair and in homologous recombination. Binds and assemble on single-stranded DNA to form a nucleoprotein filament. Hydrolyzes ATP in a ssDNA-dependent manner and promotes DNA strand exchange between homologous DNA molecules. The sequence is that of DNA repair and recombination protein RadA from Methanococcoides burtonii (strain DSM 6242 / NBRC 107633 / OCM 468 / ACE-M).